The primary structure comprises 239 residues: MPASWPPRTVIRKASGLRTLESALYRNGLGPVAGVDEVGRGACAGPLVVAACVLGPNRLESLAALDDSKKLGEKERERLFPVIRRYALAYHVVFIPSEEVDRRGVHVANIEGMRRAVAGLSVRPGYVLSDGFRVPGLPMPSLPVVGGDAAAACIAAASVLAKVSRDRLMVAMEREHPGYGFAEHKGYSTPAHTAALAELGPCAQHRYSFINVRRLVTAGTPQISGGLTDAEPGQCCELG.

The region spanning 30–221 is the RNase H type-2 domain; that stretch reads GPVAGVDEVG…VRRLVTAGTP (192 aa). A divalent metal cation is bound by residues D36, E37, and D130.

It belongs to the RNase HII family. Requires Mn(2+) as cofactor. Mg(2+) is required as a cofactor.

The protein localises to the cytoplasm. The enzyme catalyses Endonucleolytic cleavage to 5'-phosphomonoester.. In terms of biological role, endonuclease that specifically degrades the RNA of RNA-DNA hybrids. This chain is Ribonuclease HII, found in Mycobacterium sp. (strain KMS).